Reading from the N-terminus, the 236-residue chain is uncharacterized protein (236 aa).

Residues 186–236 are disordered; that stretch reads HGRGDTRNLNDITGLGHERERDRENTHYEKKPKLDSDSEVDIRSFRQDMDL. Residues 201–236 are compositionally biased toward basic and acidic residues; that stretch reads GHERERDRENTHYEKKPKLDSDSEVDIRSFRQDMDL. Residue S221 is modified to Phosphoserine.

This is an uncharacterized protein from Saccharomyces cerevisiae (strain ATCC 204508 / S288c) (Baker's yeast).